A 538-amino-acid polypeptide reads, in one-letter code: Bifunctional purine biosynthesis protein PurH (538 aa).

The MGS-like domain maps to 8–158; the sequence is IPAPDKVQVK…KNHAYVTTLT (151 aa).

The protein belongs to the PurH family.

The enzyme catalyses (6R)-10-formyltetrahydrofolate + 5-amino-1-(5-phospho-beta-D-ribosyl)imidazole-4-carboxamide = 5-formamido-1-(5-phospho-D-ribosyl)imidazole-4-carboxamide + (6S)-5,6,7,8-tetrahydrofolate. The catalysed reaction is IMP + H2O = 5-formamido-1-(5-phospho-D-ribosyl)imidazole-4-carboxamide. It functions in the pathway purine metabolism; IMP biosynthesis via de novo pathway; 5-formamido-1-(5-phospho-D-ribosyl)imidazole-4-carboxamide from 5-amino-1-(5-phospho-D-ribosyl)imidazole-4-carboxamide (10-formyl THF route): step 1/1. It participates in purine metabolism; IMP biosynthesis via de novo pathway; IMP from 5-formamido-1-(5-phospho-D-ribosyl)imidazole-4-carboxamide: step 1/1. This Rhizobium rhizogenes (strain K84 / ATCC BAA-868) (Agrobacterium radiobacter) protein is Bifunctional purine biosynthesis protein PurH.